A 309-amino-acid polypeptide reads, in one-letter code: G-protein coupled receptor 35 (309 aa).

Residues 1 to 24 lie on the Extracellular side of the membrane; the sequence is MNGTYNTCGSSDLTWPPAIKLGFY. Asn2 carries N-linked (GlcNAc...) asparagine glycosylation. Residues 25 to 45 form a helical membrane-spanning segment; that stretch reads AYLGVLLVLGLLLNSLALWVF. Residues 46 to 56 lie on the Cytoplasmic side of the membrane; it reads CCRMQQWTETR. The helical transmembrane segment at 57 to 77 threads the bilayer; that stretch reads IYMTNLAVADLCLLCTLPFVL. Residues 78 to 90 are Extracellular-facing; that stretch reads HSLRDTSDTPLCQ. A disulfide bridge connects residues Cys89 and Cys162. Residues 91-112 traverse the membrane as a helical segment; it reads LSQGIYLTNRYMSISLVTAIAV. Over 113-135 the chain is Cytoplasmic; the sequence is DRYVAVRHPLRARGLRSPRQAAA. Residues 136–156 traverse the membrane as a helical segment; that stretch reads VCAVLWVLVIGSLVARWLLGI. The Extracellular portion of the chain corresponds to 157-174; it reads QEGGFCFRSTRHNFNSMA. The chain crosses the membrane as a helical span at residues 175-195; that stretch reads FPLLGFYLPLAVVVFCSLKVV. Topologically, residues 196–218 are cytoplasmic; it reads TALAQRPPTDVGQAEATRKAARM. The chain crosses the membrane as a helical span at residues 219–239; that stretch reads VWANLLVFVVCFLPLHVGLTV. The Extracellular portion of the chain corresponds to 240 to 258; sequence RLAVGWNACALLETIRRAL. Residues 259–279 traverse the membrane as a helical segment; sequence YITSKLSDANCCLDAICYYYM. The Cytoplasmic segment spans residues 280–309; that stretch reads AKEFQEASALAVAPSAKAHKSQDSLCVTLA. A phosphoserine mark is found at Ser287 and Ser294. Phosphoserine; by GRK5 and GRK6 is present on residues Ser300 and Ser303. Thr307 is subject to Phosphothreonine.

Belongs to the G-protein coupled receptor 1 family. As to quaternary structure, interacts with GNA13. Interacts with ARRB2. Post-translationally, multiply phosphorylated in clusters of serines and threonines in the C-terminal tail. Phosphorylation of Ser-300 and Ser-303 is mediated by GRK5 and/or GRK6. Predominantly expressed in immune and gastrointestinal tissues.

It localises to the cell membrane. G-protein coupled receptor that binds to several ligands including the tryptophan metabolite kynurenic acid (KYNA), lysophosphatidic acid (LPA) or 5-hydroxyindoleacetic acid (5-HIAA) with high affinity, leading to rapid and transient activation of numerous intracellular signaling pathways. Plays a role in neutrophil recruitment to sites of inflammation and bacterial clearance through the major serotonin metabolite 5-HIAA that acts as a physiological ligand. Stimulates lipid metabolism, thermogenic, and anti-inflammatory gene expression in adipose tissue once activated by kynurenic acid. In macrophages, activation by lysophosphatidic acid promotes GPR35-induced signaling with a distinct transcriptional profile characterized by TNF production associated with ERK and NF-kappa-B activation. In turn, induces chemotaxis of macrophages. The polypeptide is G-protein coupled receptor 35 (GPR35) (Homo sapiens (Human)).